A 301-amino-acid polypeptide reads, in one-letter code: MPTLPNDLRLLEAESIAILRETAASFTKPVLLYSIGKDSGVLLHLARKAFHPSPVPFPLLHVDTGWKFREMIAFRDATVRRLGLTLIVHRNEEGHARGIDPIRSGSALHTRVMKTEALRQALDRHGFDAAIGGARRDEEKSRAKERVFSIRNAAHAWDPRDQRPELWRLWNPRIQPGESVRVFPLSNWTELDVWRYVAAQSIPVVPLYFAAERPVVHRSGALIMVDDGRLPLNPGETPEMRRVRFRTLGCYPLSGAIDSDAATVEDIIVEMRASRTSERQGRLIDGDEPASMERKKREGYF.

The disordered stretch occupies residues 278-301 (ERQGRLIDGDEPASMERKKREGYF).

The protein belongs to the PAPS reductase family. CysD subfamily. Sulfate-activating enzymes, NodP and NodQ, may be physically associated.

The enzyme catalyses sulfate + ATP + H(+) = adenosine 5'-phosphosulfate + diphosphate. Functionally, proposed to provide activated sulfate for transfer to nod factor. The sequence is that of Sulfate adenylyltransferase subunit 2 (nodP) from Azospirillum brasilense.